The following is a 400-amino-acid chain: Large envelope protein (400 aa).

Methionine 1 is modified (N-acetylmethionine). Disordered stretches follow at residues 1–24 (MGGW…PLGF) and 86–114 (TTVP…PLRD). A lipid anchor (N-myristoyl glycine; by host) is attached at glycine 2. The segment at 2–119 (GGWSSKPRKG…PPLRDTHPQA (118 aa)) is pre-S1. Residues 2–174 (GGWSSKPRKG…SSKTGDPVPN (173 aa)) are pre-S. Topologically, residues 2–181 (GGWSSKPRKG…VPNMENIASG (180 aa)) are virion surface; in external conformation. At 2–253 (GGWSSKPRKG…PGYRWMCLRR (252 aa)) the chain is on the intravirion; in internal conformation side. Tryptophan 4 carries an N-linked (GlcNAc...) asparagine glycan. Polar residues predominate over residues 96 to 106 (STNRQSGRQPT). The pre-S2 stretch occupies residues 120–174 (MQWNSTTFLQTLQDSRVRALYLPAGGSSSGTVSPAQNTVSAISSISSKTGDPVPN). The chain crosses the membrane as a helical span at residues 182–202 (LLGHLLVLQAGFFSLTKILTI). Residues 203 to 253 (PQSLDSWWTSLNFLGGTPACPGQNSQSQISSHSPTCCPPICPGYRWMCLRR) lie on the Intravirion; in external conformation side of the membrane. A helical membrane pass occupies residues 254–274 (FIIFLCILLLCLIFLLVLLDY). The Virion surface segment spans residues 275–348 (QGMLPVCPLT…WASVRFSWLS (74 aa)). N-linked (GlcNAc...) asparagine; by host glycosylation occurs at asparagine 320. A helical membrane pass occupies residues 349-369 (LLVPFVQWFVGLSPTVWLSVI). Topologically, residues 370–375 (WMMWFW) are intravirion. A helical transmembrane segment spans residues 376 to 398 (GPSLYNILRPFMPLLPTFFCLWV). Residues 399–400 (YI) lie on the Virion surface side of the membrane.

This sequence belongs to the orthohepadnavirus major surface antigen family. As to quaternary structure, interacts (via its myristoylated pre-S1 region) with the host SLC10A1/NTCP; this interaction is essential for viral entry. In terms of assembly, in its internal form (Li-HBsAg), interacts with the capsid protein and with the isoform S. Interacts with host chaperone CANX. Associates with host chaperone CANX through its pre-S2 N glycan; this association may be essential for isoform M proper secretion. As to quaternary structure, interacts with isoform L. Interacts with the antigens of satellite virus HDV (HDVAgs); this interaction is required for encapsidation of HDV genomic RNA. Post-translationally, isoform M is N-terminally acetylated by host at a ratio of 90%, and N-glycosylated by host at the pre-S2 region. In terms of processing, myristoylated; this modification is essential for its interaction with the host protein SLC10A1/NTCP.

Its subcellular location is the virion membrane. The large envelope protein exists in two topological conformations, one which is termed 'external' or Le-HBsAg and the other 'internal' or Li-HBsAg. In its external conformation the protein attaches the virus to cell receptors and thereby initiating infection. This interaction determines the species specificity and liver tropism. This attachment induces virion internalization predominantly through caveolin-mediated endocytosis. The large envelope protein also assures fusion between virion membrane and endosomal membrane. In its internal conformation the protein plays a role in virion morphogenesis and mediates the contact with the nucleocapsid like a matrix protein. Functionally, the middle envelope protein plays an important role in the budding of the virion. It is involved in the induction of budding in a nucleocapsid independent way. In this process the majority of envelope proteins bud to form subviral lipoprotein particles of 22 nm of diameter that do not contain a nucleocapsid. This chain is Large envelope protein, found in Hepatitis B virus genotype B2 subtype adw (isolate China/patient4/1996) (HBV-B).